We begin with the raw amino-acid sequence, 443 residues long: Threonine/serine transporter TdcC (443 aa).

The next 11 helical transmembrane spans lie at 22-42, 44-64, 97-117, 140-160, 163-183, 207-227, 261-281, 311-331, 366-386, 389-409, and 423-443; these read TTWTLGLFGTAIGAGVLFFPI, AGFGGLIPILLMLVLAYPIAF, GVVITFLYFFAICPLLWIYGV, FVALFLLLLMAFVIWFGKDLM, VMSYLVWPFIASLVLISLSLI, ILITVWLGISIMVFSFNFSPI, MLMVAVVMFFAFSCLFTLSPA, FAITLEYAASIIALVAIFKSF, LSMIFIMGSTWVVAYANPNIL, IEAMGAPIIASLLCLLPMYAI, and DNVFVTVIGLLTILNIVYKLF.

Belongs to the amino acid/polyamine transporter 2 family. SdaC/TdcC subfamily.

The protein resides in the cell inner membrane. It carries out the reaction L-threonine(in) + H(+)(in) = L-threonine(out) + H(+)(out). The enzyme catalyses L-serine(in) + H(+)(in) = L-serine(out) + H(+)(out). Involved in the import of threonine and serine into the cell, with the concomitant import of a proton (symport system). This Shigella flexneri serotype 5b (strain 8401) protein is Threonine/serine transporter TdcC.